Here is a 120-residue protein sequence, read N- to C-terminus: Large ribosomal subunit protein eL8 (120 aa).

The protein belongs to the eukaryotic ribosomal protein eL8 family. As to quaternary structure, part of the 50S ribosomal subunit. Probably part of the RNase P complex.

Its subcellular location is the cytoplasm. In terms of biological role, multifunctional RNA-binding protein that recognizes the K-turn motif in ribosomal RNA, the RNA component of RNase P, box H/ACA, box C/D and box C'/D' sRNAs. The chain is Large ribosomal subunit protein eL8 from Methanosarcina mazei (strain ATCC BAA-159 / DSM 3647 / Goe1 / Go1 / JCM 11833 / OCM 88) (Methanosarcina frisia).